Reading from the N-terminus, the 718-residue chain is Probable GTP diphosphokinase RSH2, chloroplastic (718 aa).

The N-terminal 68 residues, 1–68 (MSVPAIAVYT…LFSSPTAAPR (68 aa)), are a transit peptide targeting the chloroplast. The segment at 9 to 48 (YTSPPGAVYTSSSSSELEASSRGSAPCATAAPPSPASSHR) is disordered. Over residues 19 to 39 (SSSSSELEASSRGSAPCATAA) the composition is skewed to low complexity. An HD domain is found at 243 to 347 (YLQHCVETAV…IKLADRLHNM (105 aa)).

It belongs to the RelA/SpoT family.

The protein resides in the plastid. It localises to the chloroplast. It catalyses the reaction GTP + ATP = guanosine 3'-diphosphate 5'-triphosphate + AMP. Functionally, probable ppGpp (guanosine 3'-diphosphate 5'-diphosphate) synthetase that may be involved in a rapid plant ppGpp-mediated response to pathogens and other stresses. The chain is Probable GTP diphosphokinase RSH2, chloroplastic (RSH2) from Oryza sativa subsp. japonica (Rice).